A 291-amino-acid chain; its full sequence is 33 kDa chaperonin (291 aa).

2 disulfide bridges follow: C236/C238 and C269/C272.

The protein belongs to the HSP33 family. In terms of processing, under oxidizing conditions two disulfide bonds are formed involving the reactive cysteines. Under reducing conditions zinc is bound to the reactive cysteines and the protein is inactive.

It is found in the cytoplasm. Redox regulated molecular chaperone. Protects both thermally unfolding and oxidatively damaged proteins from irreversible aggregation. Plays an important role in the bacterial defense system toward oxidative stress. This Lactobacillus johnsonii (strain CNCM I-12250 / La1 / NCC 533) protein is 33 kDa chaperonin.